We begin with the raw amino-acid sequence, 334 residues long: Protein-methionine-sulfoxide reductase catalytic subunit MsrP (334 aa).

Positions 1–44 form a signal peptide, tat-type signal; that stretch reads MKKKQFLKESDVTAESVFFMKRRQVLKALGISAAALSLPHAAHA. Mo-molybdopterin-binding positions include asparagine 88, 91–92, cysteine 146, threonine 181, asparagine 233, arginine 238, and 249–251; these read YE and GIK.

Belongs to the MsrP family. As to quaternary structure, heterodimer of a catalytic subunit (MsrP) and a heme-binding subunit (MsrQ). The cofactor is Mo-molybdopterin. Post-translationally, predicted to be exported by the Tat system. The position of the signal peptide cleavage has not been experimentally proven.

It is found in the periplasm. It carries out the reaction L-methionyl-[protein] + a quinone + H2O = L-methionyl-(S)-S-oxide-[protein] + a quinol. It catalyses the reaction L-methionyl-[protein] + a quinone + H2O = L-methionyl-(R)-S-oxide-[protein] + a quinol. Part of the MsrPQ system that repairs oxidized periplasmic proteins containing methionine sulfoxide residues (Met-O), using respiratory chain electrons. Thus protects these proteins from oxidative-stress damage caused by reactive species of oxygen and chlorine generated by the host defense mechanisms. MsrPQ is essential for the maintenance of envelope integrity under bleach stress, rescuing a wide series of structurally unrelated periplasmic proteins from methionine oxidation, including the primary periplasmic chaperone SurA and the lipoprotein Pal. The catalytic subunit MsrP is non-stereospecific, being able to reduce both (R-) and (S-) diastereoisomers of methionine sulfoxide. This is Protein-methionine-sulfoxide reductase catalytic subunit MsrP from Escherichia coli O139:H28 (strain E24377A / ETEC).